We begin with the raw amino-acid sequence, 196 residues long: dTDP-4-dehydro-6-deoxyglucose 3-epimerase (196 aa).

Substrate is bound by residues Arg-21, Glu-26, 45–47, and Arg-57; that span reads QVN. His-60 serves as the catalytic Proton acceptor. Residues Lys-70 and Arg-117 each contribute to the substrate site. Tyr-130 functions as the Proton donor in the catalytic mechanism. Substrate is bound by residues Glu-141 and Arg-166.

It belongs to the dTDP-4-dehydrorhamnose 3,5-epimerase family. Homodimer.

The enzyme catalyses dTDP-4-dehydro-6-deoxy-alpha-D-glucose = dTDP-4-dehydro-6-deoxy-alpha-D-allose. It participates in antibiotic biosynthesis. Involved in the biosynthesis of dTDP-6-deoxy-D-allose, an intermediate in the biosynthesis of mycinose, which is one of the two unusual sugars attached to the 16-membered macrolactone ring of the aglycone antibiotic chalcomycin. Catalyzes the conversion of dTDP-4-oxo-6-deoxyglucose to dTDP-4-oxo-6-deoxyallose, via a C-3 epimerization. This chain is dTDP-4-dehydro-6-deoxyglucose 3-epimerase, found in Streptomyces bikiniensis.